The primary structure comprises 382 residues: Galactokinase (382 aa).

34-37 lines the substrate pocket; it reads EHTD. An ATP-binding site is contributed by 124-130; that stretch reads GAGLSSS. 2 residues coordinate Mg(2+): Ser130 and Glu162. The active-site Proton acceptor is Asp174. Tyr223 is a binding site for substrate.

The protein belongs to the GHMP kinase family. GalK subfamily.

The protein resides in the cytoplasm. The catalysed reaction is alpha-D-galactose + ATP = alpha-D-galactose 1-phosphate + ADP + H(+). The protein operates within carbohydrate metabolism; galactose metabolism. In terms of biological role, catalyzes the transfer of the gamma-phosphate of ATP to D-galactose to form alpha-D-galactose-1-phosphate (Gal-1-P). This is Galactokinase from Shigella flexneri serotype 5b (strain 8401).